Reading from the N-terminus, the 48-residue chain is MRKVEDQIKIQRSFTELNELFKFLGDYFDPVSIGLVGVKIGNLGIKLE.

This is an uncharacterized protein from Haemophilus influenzae (strain ATCC 51907 / DSM 11121 / KW20 / Rd).